Consider the following 245-residue polypeptide: Octopine transport system permease protein OccM (245 aa).

5 consecutive transmembrane segments (helical) span residues 12 to 32, 57 to 77, 96 to 116, 163 to 183, and 204 to 224; these read FVAL…SVAL, FYIF…IYYG, AYWC…AEIM, ILMV…ITGI, and IYLI…WALW. Positions 19–216 constitute an ABC transmembrane type-1 domain; the sequence is IPLALQLAVF…ILNFIVARLF (198 aa).

It belongs to the binding-protein-dependent transport system permease family. HisMQ subfamily.

The protein localises to the cell inner membrane. Its function is as follows. Component of the octopine active transport system probably consisting of four subunits: Q, M, P and T. The sequence is that of Octopine transport system permease protein OccM (occM) from Rhizobium radiobacter (Agrobacterium tumefaciens).